Reading from the N-terminus, the 438-residue chain is Glutamate-1-semialdehyde 2,1-aminomutase (438 aa).

Residue K278 is modified to N6-(pyridoxal phosphate)lysine.

It belongs to the class-III pyridoxal-phosphate-dependent aminotransferase family. HemL subfamily. As to quaternary structure, homodimer. It depends on pyridoxal 5'-phosphate as a cofactor.

It localises to the cytoplasm. The catalysed reaction is (S)-4-amino-5-oxopentanoate = 5-aminolevulinate. It functions in the pathway porphyrin-containing compound metabolism; protoporphyrin-IX biosynthesis; 5-aminolevulinate from L-glutamyl-tRNA(Glu): step 2/2. This Delftia acidovorans (strain DSM 14801 / SPH-1) protein is Glutamate-1-semialdehyde 2,1-aminomutase.